Consider the following 132-residue polypeptide: Small ribosomal subunit protein uS8 (132 aa).

The protein belongs to the universal ribosomal protein uS8 family. In terms of assembly, part of the 30S ribosomal subunit. Contacts proteins S5 and S12.

In terms of biological role, one of the primary rRNA binding proteins, it binds directly to 16S rRNA central domain where it helps coordinate assembly of the platform of the 30S subunit. The polypeptide is Small ribosomal subunit protein uS8 (Sinorhizobium medicae (strain WSM419) (Ensifer medicae)).